We begin with the raw amino-acid sequence, 106 residues long: Phosphoribosyl-ATP pyrophosphatase (106 aa).

This sequence belongs to the PRA-PH family.

It localises to the cytoplasm. The catalysed reaction is 1-(5-phospho-beta-D-ribosyl)-ATP + H2O = 1-(5-phospho-beta-D-ribosyl)-5'-AMP + diphosphate + H(+). Its pathway is amino-acid biosynthesis; L-histidine biosynthesis; L-histidine from 5-phospho-alpha-D-ribose 1-diphosphate: step 2/9. This Methylobacillus flagellatus (strain ATCC 51484 / DSM 6875 / VKM B-1610 / KT) protein is Phosphoribosyl-ATP pyrophosphatase.